Consider the following 465-residue polypeptide: Argininosuccinate lyase (465 aa).

The protein belongs to the lyase 1 family. Argininosuccinate lyase subfamily.

The protein localises to the cytoplasm. It catalyses the reaction 2-(N(omega)-L-arginino)succinate = fumarate + L-arginine. It functions in the pathway amino-acid biosynthesis; L-arginine biosynthesis; L-arginine from L-ornithine and carbamoyl phosphate: step 3/3. This chain is Argininosuccinate lyase, found in Rhodopseudomonas palustris (strain BisB5).